A 143-amino-acid chain; its full sequence is Hemoglobin anodic subunit alpha (143 aa).

Ser-2 is modified (N-acetylserine). One can recognise a Globin domain in the interval Ser-2–Arg-143. Position 60 (His-60) interacts with O2. Residue His-89 coordinates heme b.

It belongs to the globin family. In terms of assembly, heterotetramer of two alpha chains and two beta chains. In terms of tissue distribution, red blood cells.

Involved in oxygen transport from gills to the various peripheral tissues. The chain is Hemoglobin anodic subunit alpha (hba) from Anguilla anguilla (European freshwater eel).